A 373-amino-acid chain; its full sequence is Dual-specificity RNA methyltransferase RlmN (373 aa).

E94 functions as the Proton acceptor in the catalytic mechanism. One can recognise a Radical SAM core domain in the interval E100 to D339. A disulfide bridge connects residues C107 and C344. C114, C118, and C121 together coordinate [4Fe-4S] cluster. S-adenosyl-L-methionine is bound by residues G168–E169, S200, S222–H224, and N301. C344 (S-methylcysteine intermediate) is an active-site residue.

It belongs to the radical SAM superfamily. RlmN family. [4Fe-4S] cluster serves as cofactor.

Its subcellular location is the cytoplasm. It catalyses the reaction adenosine(2503) in 23S rRNA + 2 reduced [2Fe-2S]-[ferredoxin] + 2 S-adenosyl-L-methionine = 2-methyladenosine(2503) in 23S rRNA + 5'-deoxyadenosine + L-methionine + 2 oxidized [2Fe-2S]-[ferredoxin] + S-adenosyl-L-homocysteine. The catalysed reaction is adenosine(37) in tRNA + 2 reduced [2Fe-2S]-[ferredoxin] + 2 S-adenosyl-L-methionine = 2-methyladenosine(37) in tRNA + 5'-deoxyadenosine + L-methionine + 2 oxidized [2Fe-2S]-[ferredoxin] + S-adenosyl-L-homocysteine. Functionally, specifically methylates position 2 of adenine 2503 in 23S rRNA and position 2 of adenine 37 in tRNAs. m2A2503 modification seems to play a crucial role in the proofreading step occurring at the peptidyl transferase center and thus would serve to optimize ribosomal fidelity. The sequence is that of Dual-specificity RNA methyltransferase RlmN from Shewanella sp. (strain W3-18-1).